Reading from the N-terminus, the 682-residue chain is MPSLRTRREEAEMELSAPGPSPWTPAAQARVSDAPAVTHPGSAACGTPCCSDTELEAICPHYQQPDCDTRTEDKEFLHKEDIHEDLESQAEISENYAGDVFQVPKLGDLCDDVSERDWGVPEGRRLPQSLSQEGDFTPAAMGLLRGPLGEKDLDCNGFDSRFSLSPNLMACQEIPXXERPHPYDMGGQSFQHSVDLTGHEGVPTAESPLICNECGKTFRGNPDLIQRQIVHTGEASFMCDDCGKTFSQNSVLKNRHRSHMSEKAYQCSECGKAFRGHSDFSRHQSHHSSERPYTCTECGKAFSQNSSLKKHQKSHMSEKPYECNECGKAFRRSSNLIQHQRIHSGEKPYVCSECGKAFRRSSNLIKHHRTHTGEKPFECGECGKAFSQSAHLRKHQRVHTGEKPYECNDCGKPFSRVSNLIKHHRVHTGEKPYKCSDCGKXFSQSSSLIQHRRIHTGEKPHVCNVCGKAFSYSSVLRKHQIIHTGEKPYRCSVCGKAFSHSSALIQHQGVHTGDKPYACHECGKTFGRSSNLILHQRVHTGEKPYECTECGKTFSQSSTLIQHQRIHNGLKPHECNQCGKAFNRSSNLIHHQKVHTGEKPYTCVECGKGFSQSSHLIQHQIIHTGERPYKCSECGKAFSQRSVLIQHQRIHTGVKPYDCAACGKAFSQRSKLIKHQLIHTRE.

Basic and acidic residues predominate over residues 1–10 (MPSLRTRREE). The interval 1–38 (MPSLRTRREEAEMELSAPGPSPWTPAAQARVSDAPAVT) is disordered. Positions 62–210 (YQQPDCDTRT…GVPTAESPLI (149 aa)) are necessary for transcription activation. A C2H2-type 1; degenerate zinc finger spans residues 209 to 231 (LICNECGKTFRGNPDLIQRQIVH). The C2H2-type 2; degenerate zinc-finger motif lies at 237–259 (FMCDDCGKTFSQNSVLKNRHRSH). K253 participates in a covalent cross-link: Glycyl lysine isopeptide (Lys-Gly) (interchain with G-Cter in SUMO2). 8 consecutive C2H2-type zinc fingers follow at residues 265 to 287 (YQCS…QSHH), 293 to 315 (YTCT…QKSH), 321 to 343 (YECN…QRIH), 349 to 371 (YVCS…HRTH), 377 to 399 (FECG…QRVH), 405 to 427 (YECN…HRVH), 433 to 455 (YKCS…RRIH), and 461 to 483 (HVCN…QIIH). Required for nuclear localization regions lie at residues 268-393 (SECG…AHLR) and 341-373 (RIHS…THTG). A required for nuclear localization region spans residues 473–503 (SSVLRKHQIIHTGEKPYRCSVCGKAFSHSSA). Position 487 is an N6-acetyllysine (K487). 7 consecutive C2H2-type zinc fingers follow at residues 489 to 511 (YRCS…QGVH), 517 to 539 (YACH…QRVH), 545 to 567 (YECT…QRIH), 573 to 595 (HECN…QKVH), 601 to 623 (YTCV…QIIH), 629 to 651 (YKCS…QRIH), and 657 to 679 (YDCA…QLIH).

This sequence belongs to the krueppel C2H2-type zinc-finger protein family. As to quaternary structure, interacts with INCA1; the interaction inhibits INCA1 activity and induces the cell cycle process.

It localises to the nucleus. Its function is as follows. Acts as a transcriptional activator. Promotes cell proliferation by facilitating the cell cycle phase transition from the S to G2/M phase. Involved in both the hemin- and phorbol myristate acetate (PMA)-induced erythroid and megakaryocytic differentiation, respectively. Also plays a role as an inhibitor of cell apoptosis. This Pan troglodytes (Chimpanzee) protein is Zinc finger protein 16 (ZNF16).